The following is a 554-amino-acid chain: Hydroxylamine reductase (554 aa).

Residues Cys-3, Cys-6, Cys-18, and Cys-25 each coordinate [2Fe-2S] cluster. Residues His-252, Glu-276, Cys-320, Cys-408, Cys-436, Cys-461, Glu-495, and Lys-497 each contribute to the hybrid [4Fe-2O-2S] cluster site. The residue at position 408 (Cys-408) is a Cysteine persulfide.

Belongs to the HCP family. Requires [2Fe-2S] cluster as cofactor. The cofactor is hybrid [4Fe-2O-2S] cluster.

Its subcellular location is the cytoplasm. It carries out the reaction A + NH4(+) + H2O = hydroxylamine + AH2 + H(+). In terms of biological role, catalyzes the reduction of hydroxylamine to form NH(3) and H(2)O. This chain is Hydroxylamine reductase, found in Shewanella baltica (strain OS155 / ATCC BAA-1091).